The sequence spans 211 residues: uncharacterized protein (211 aa).

The interval 1-43 (MRPEVGREPAALQPRQRPRSDHQLHRSPFTVPPRTPACRSPGP) is disordered.

This is an uncharacterized protein from Homo sapiens (Human).